Here is a 323-residue protein sequence, read N- to C-terminus: Putative dTDP-D-glucose 4,6-dehydratase (323 aa).

Thr124 is a substrate binding site. Residue Asp125 is the Proton donor of the active site. Active-site proton acceptor residues include Glu126 and Tyr149.

Belongs to the NAD(P)-dependent epimerase/dehydratase family. dTDP-glucose dehydratase subfamily. NAD(+) serves as cofactor.

It carries out the reaction dTDP-alpha-D-glucose = dTDP-4-dehydro-6-deoxy-alpha-D-glucose + H2O. This Acanthamoeba polyphaga mimivirus (APMV) protein is Putative dTDP-D-glucose 4,6-dehydratase.